Reading from the N-terminus, the 156-residue chain is 6,7-dimethyl-8-ribityllumazine synthase (156 aa).

Residues F25, 59–61 (AFE), and 83–85 (AVI) each bind 5-amino-6-(D-ribitylamino)uracil. 88–89 (AT) contributes to the (2S)-2-hydroxy-3-oxobutyl phosphate binding site. The active-site Proton donor is H91. F116 contacts 5-amino-6-(D-ribitylamino)uracil. R130 is a binding site for (2S)-2-hydroxy-3-oxobutyl phosphate.

This sequence belongs to the DMRL synthase family.

The enzyme catalyses (2S)-2-hydroxy-3-oxobutyl phosphate + 5-amino-6-(D-ribitylamino)uracil = 6,7-dimethyl-8-(1-D-ribityl)lumazine + phosphate + 2 H2O + H(+). The protein operates within cofactor biosynthesis; riboflavin biosynthesis; riboflavin from 2-hydroxy-3-oxobutyl phosphate and 5-amino-6-(D-ribitylamino)uracil: step 1/2. Catalyzes the formation of 6,7-dimethyl-8-ribityllumazine by condensation of 5-amino-6-(D-ribitylamino)uracil with 3,4-dihydroxy-2-butanone 4-phosphate. This is the penultimate step in the biosynthesis of riboflavin. This is 6,7-dimethyl-8-ribityllumazine synthase from Nitratidesulfovibrio vulgaris (strain ATCC 29579 / DSM 644 / CCUG 34227 / NCIMB 8303 / VKM B-1760 / Hildenborough) (Desulfovibrio vulgaris).